The primary structure comprises 364 residues: Endoglucanase A (364 aa).

Catalysis depends on E169, which acts as the Proton donor. Residue E293 is the Nucleophile of the active site.

The protein belongs to the glycosyl hydrolase 5 (cellulase A) family.

The protein localises to the cytoplasm. It catalyses the reaction Endohydrolysis of (1-&gt;4)-beta-D-glucosidic linkages in cellulose, lichenin and cereal beta-D-glucans.. The catalysed reaction is Endohydrolysis of (1-&gt;4)-beta-D-xylosidic linkages in xylans.. Hydrolyzes both carboxymethylcellulose and xylan. Probably has a role in hydrolyzing oligosaccharides derived from cellulose, which are transported across the cell wall. The chain is Endoglucanase A (celA) from Ruminococcus albus.